A 497-amino-acid chain; its full sequence is Probable cytosol aminopeptidase (497 aa).

Mn(2+) is bound by residues lysine 265 and aspartate 270. The active site involves lysine 277. Mn(2+) contacts are provided by aspartate 288, aspartate 347, and glutamate 349. The active site involves arginine 351.

It belongs to the peptidase M17 family. Mn(2+) is required as a cofactor.

It is found in the cytoplasm. The enzyme catalyses Release of an N-terminal amino acid, Xaa-|-Yaa-, in which Xaa is preferably Leu, but may be other amino acids including Pro although not Arg or Lys, and Yaa may be Pro. Amino acid amides and methyl esters are also readily hydrolyzed, but rates on arylamides are exceedingly low.. It catalyses the reaction Release of an N-terminal amino acid, preferentially leucine, but not glutamic or aspartic acids.. Its function is as follows. Presumably involved in the processing and regular turnover of intracellular proteins. Catalyzes the removal of unsubstituted N-terminal amino acids from various peptides. The protein is Probable cytosol aminopeptidase of Geobacillus thermodenitrificans (strain NG80-2).